The primary structure comprises 337 residues: MYKNLEEHNRLVNKYLKIFFVVSLYWCTSILTVFVNKHLLSSDTVNLGAPLFMSWFQCVVSTVICFVASRLSRKYPSVFTFPEGNPLDIDTFRKILPLSVLYTLMIGANNLSLSYVTVAFYYIGRSLTTVFSVVLTYVILRQRTSFKCLLCCGAIVVGFWLGVDQESLTEVFSWRGTIFGVLSSLALAMFSIQTKKSLGYVNQEVWLLSYYNNLYSTLLFLPLIIINGELESIITYPHLWASWFWAAMTLSGLCGFAIGFVTALEIKVTSALTHNISGTAKACAQTVIATQYYHDVRSALWWTSNVVVLVASAAYTRVKQLEMMRQHQQRSTATQKA.

The next 8 membrane-spanning stretches (helical) occupy residues Asn13–Val35, Val45–Val67, Ile95–Thr117, Tyr121–Leu140, Ser145–Val163, Ser173–Ile192, Val205–Asn227, and Ser242–Leu264.

The protein belongs to the TPT transporter family. SLC35C subfamily.

It is found in the golgi apparatus membrane. Its function is as follows. Involved in GDP-fucose import from the cytoplasm into the Golgi lumen. Plays a major role in the fucosylation of N-glycans. Functions redundantly with Efr in the O-fucosylation of Notch, positively regulating Notch signaling. In Drosophila melanogaster (Fruit fly), this protein is GDP-fucose transporter, Golgi.